The chain runs to 352 residues: Ribosomal lysine N-methyltransferase 5 (352 aa).

Residues Trp-107, 161–163 (GSG), Asp-183, Trp-244, and Leu-274 contribute to the S-adenosyl-L-methionine site.

This sequence belongs to the class I-like SAM-binding methyltransferase superfamily. RKM5 family.

S-adenosyl-L-methionine-dependent protein-lysine N-methyltransferase that methylates 60S ribosomal protein L1. This chain is Ribosomal lysine N-methyltransferase 5 (RKM5), found in Candida glabrata (strain ATCC 2001 / BCRC 20586 / JCM 3761 / NBRC 0622 / NRRL Y-65 / CBS 138) (Yeast).